A 701-amino-acid chain; its full sequence is F-box/LRR-repeat protein 17 (701 aa).

The segment covering 1–11 (MGHLLSKEPRN) has biased composition (basic and acidic residues). Disordered stretches follow at residues 1 to 20 (MGHL…RPRC), 72 to 94 (APAG…YAAA), and 227 to 300 (GGGG…DADC). A compositionally biased stretch (gly residues) spans 227-237 (GGGGGPAGGGA). Positions 252-264 (EQPPQPLCPPPSS) are enriched in pro residues. The 48-residue stretch at 318 to 365 (TPDINQLPPSILLKIFSNLSLDERCLSASLVCKYWRDLCLDFQFWKQL) folds into the F-box domain.

This sequence belongs to the FBXL17 family. As to quaternary structure, part of the SCF (SKP1-CUL1-F-box) E3 ubiquitin-protein ligase complex SCF(FBXL17) composed of CUL1, SKP1, RBX1 and FBXL17. Interacts with BTB domain-containing proteins such as KLHL12, BCL6 and BACH1; specifically recognizes and binds a conserved degron of non-consecutive residues present at the interface of BTB dimers of aberrant composition. Interacts with SUFU. Interacts with PRMT1.

Its subcellular location is the cytoplasm. The protein resides in the nucleus. Functionally, substrate-recognition component of the SCF(FBXL17) E3 ubiquitin ligase complex, a key component of a quality control pathway required to ensure functional dimerization of BTB domain-containing proteins (dimerization quality control, DQC). FBXL17 specifically recognizes and binds a conserved degron of non-consecutive residues present at the interface of BTB dimers of aberrant composition: aberrant BTB dimer are then ubiquitinated by the SCF(FBXL17) complex and degraded by the proteasome. The ability of the SCF(FBXL17) complex to eliminate compromised BTB dimers is required for the differentiation and survival of neural crest and neuronal cells. The SCF(FBXL17) complex mediates ubiquitination and degradation of BACH1. The SCF(FBXL17) complex is also involved in the regulation of the hedgehog/smoothened (Hh) signaling pathway by mediating the ubiquitination and degradation of SUFU, allowing the release of GLI1 from SUFU for proper Hh signal transduction. The SCF(FBXL17) complex mediates ubiquitination and degradation of PRMT1. The polypeptide is F-box/LRR-repeat protein 17 (Homo sapiens (Human)).